The sequence spans 926 residues: Transcriptional activator protein acu-15 (926 aa).

Residues 24-51 (CDRCRSKKIRCDGIRPCCSQCANVGFEC) constitute a DNA-binding region (zn(2)-C6 fungal-type). Disordered regions lie at residues 100–129 (KMHS…TPAK), 602–649 (LPQS…SASL), and 667–801 (TPQH…TSTG). Over residues 119 to 129 (EIKRDSGTPAK) the composition is skewed to basic and acidic residues. Low complexity-rich tracts occupy residues 623-632 (AQQGSPSPSA) and 669-681 (QHQQ…LQQQ). Polar residues-rich tracts occupy residues 689–703 (ARSQ…QKAQ) and 726–736 (RTSTGTQSTPN). Positions 740–792 (LSLSSPQSPVSPVQMRSQPHQLQQQQQQQPQPQQQQQQHQRSSIASSHSQQGQ) are enriched in low complexity.

It localises to the nucleus. Its function is as follows. Positive regulator of acetate induction. The chain is Transcriptional activator protein acu-15 (acu-15) from Neurospora crassa (strain ATCC 24698 / 74-OR23-1A / CBS 708.71 / DSM 1257 / FGSC 987).